Reading from the N-terminus, the 290-residue chain is Signal peptidase I (290 aa).

At 1-13 (MKFLRSVYAFCSS) the chain is on the cytoplasmic side. A helical transmembrane segment spans residues 14–34 (WVGTIVIVLLVIFFIAQAFII). At 35 to 290 (PSRSMVGTLY…KIIKKENATH (256 aa)) the chain is on the extracellular side. Residues Ser-38 and Lys-106 contribute to the active site.

Belongs to the peptidase S26 family.

The protein localises to the cell membrane. The catalysed reaction is Cleavage of hydrophobic, N-terminal signal or leader sequences from secreted and periplasmic proteins.. This is Signal peptidase I (lepB) from Helicobacter pylori (strain ATCC 700392 / 26695) (Campylobacter pylori).